A 118-amino-acid chain; its full sequence is Small ribosomal subunit protein uS13 (118 aa).

Residues 95–118 (LPLRGQRTRTNARTRKGPRKAIKK) form a disordered region.

Belongs to the universal ribosomal protein uS13 family. Part of the 30S ribosomal subunit. Forms a loose heterodimer with protein S19. Forms two bridges to the 50S subunit in the 70S ribosome.

Located at the top of the head of the 30S subunit, it contacts several helices of the 16S rRNA. In the 70S ribosome it contacts the 23S rRNA (bridge B1a) and protein L5 of the 50S subunit (bridge B1b), connecting the 2 subunits; these bridges are implicated in subunit movement. Contacts the tRNAs in the A and P-sites. The protein is Small ribosomal subunit protein uS13 of Xylella fastidiosa (strain 9a5c).